Consider the following 198-residue polypeptide: Small ribosomal subunit protein uS4z (198 aa).

Position 68 is a phosphoserine (Ser-68). An S4 RNA-binding domain is found at 109–180 (RRLQTIVFKS…PGRVKRRNEK (72 aa)). The segment at 163 to 198 (TSPFGGGRPGRVKRRNEKSASKKASGGGDADGDDEE) is disordered.

This sequence belongs to the universal ribosomal protein uS4 family. As to quaternary structure, binds to the translation initiation factors TIF3E1.

This Arabidopsis thaliana (Mouse-ear cress) protein is Small ribosomal subunit protein uS4z (RPS9B).